Consider the following 247-residue polypeptide: MATNEDQKQTESGRHQEVGHKSLLQSDALYQYILETSVFPREHEAMKELREVTAKHPWNIMTTSADEGQFLSMLLKLINAKNTMEIGVYTGYSLLATALAIPEDGKILAMDINKENYELGLPVIKKAGVDHKIDFREGPALPVLDEMIKDEKNHGSYDFIFVDADKDNYLNYHKRLIDLVKVGGVIGYDNTLWNGSVVAPPDAPLRKYVRYYRDFVLELNKALAVDPRIEICMLPVGDGITICRRIK.

Residue lysine 21 coordinates substrate. S-adenosyl-L-methionine is bound by residues threonine 63, glutamate 85, 87 to 88 (GV), serine 93, aspartate 111, and alanine 140. Aspartate 163 is a binding site for substrate. Residue aspartate 163 coordinates a divalent metal cation. S-adenosyl-L-methionine is bound at residue aspartate 165. Positions 189 and 190 each coordinate a divalent metal cation. Asparagine 194 serves as a coordination point for substrate.

The protein belongs to the class I-like SAM-binding methyltransferase superfamily. Cation-dependent O-methyltransferase family. CCoAMT subfamily. As to quaternary structure, homodimer. Requires Ca(2+) as cofactor. It depends on Mg(2+) as a cofactor. The cofactor is Zn(2+).

It catalyses the reaction (E)-caffeoyl-CoA + S-adenosyl-L-methionine = (E)-feruloyl-CoA + S-adenosyl-L-homocysteine + H(+). The protein operates within aromatic compound metabolism; phenylpropanoid biosynthesis. In terms of biological role, methylates caffeoyl-CoA to feruloyl-CoA and 5-hydroxyferuloyl-CoA to sinapoyl-CoA. Plays a role in the synthesis of feruloylated polysaccharides. Involved in the reinforcement of the plant cell wall. Also involved in the responding to wounding or pathogen challenge by the increased formation of cell wall-bound ferulic acid polymers. The polypeptide is Caffeoyl-CoA O-methyltransferase (CCOMT) (Medicago sativa (Alfalfa)).